Reading from the N-terminus, the 247-residue chain is PF03932 family protein CutC (247 aa).

It belongs to the CutC family.

It is found in the cytoplasm. The sequence is that of PF03932 family protein CutC from Aliivibrio fischeri (strain MJ11) (Vibrio fischeri).